We begin with the raw amino-acid sequence, 470 residues long: Membrane-bound lytic murein transglycosylase F (470 aa).

A signal peptide spans Met-1–Ile-21. The tract at residues Gln-22–Val-259 is non-LT domain. The interval Arg-260–Lys-470 is LT domain. Glu-304 is a catalytic residue.

The protein in the N-terminal section; belongs to the bacterial solute-binding protein 3 family. This sequence in the C-terminal section; belongs to the transglycosylase Slt family.

Its subcellular location is the cell outer membrane. The enzyme catalyses Exolytic cleavage of the (1-&gt;4)-beta-glycosidic linkage between N-acetylmuramic acid (MurNAc) and N-acetylglucosamine (GlcNAc) residues in peptidoglycan, from either the reducing or the non-reducing ends of the peptidoglycan chains, with concomitant formation of a 1,6-anhydrobond in the MurNAc residue.. Functionally, murein-degrading enzyme that degrades murein glycan strands and insoluble, high-molecular weight murein sacculi, with the concomitant formation of a 1,6-anhydromuramoyl product. Lytic transglycosylases (LTs) play an integral role in the metabolism of the peptidoglycan (PG) sacculus. Their lytic action creates space within the PG sacculus to allow for its expansion as well as for the insertion of various structures such as secretion systems and flagella. This is Membrane-bound lytic murein transglycosylase F from Pseudoalteromonas translucida (strain TAC 125).